The chain runs to 181 residues: Small ribosomal subunit protein cS23 (181 aa).

The segment at 1 to 40 (MLPMSVHPATTPALASRPRVSLPRPSTPSSSSSLVHLKSR) is disordered. The segment covering 14-36 (LASRPRVSLPRPSTPSSSSSLVH) has biased composition (low complexity).

Belongs to the chloroplast-specific ribosomal protein cS23 family. Part of the 30S ribosomal subunit.

The protein resides in the plastid. It is found in the chloroplast. Functionally, component of the chloroplast ribosome (chloro-ribosome), a dedicated translation machinery responsible for the synthesis of chloroplast genome-encoded proteins, including proteins of the transcription and translation machinery and components of the photosynthetic apparatus. In Hordeum vulgare (Barley), this protein is Small ribosomal subunit protein cS23 (PSRP3).